The chain runs to 291 residues: ATP synthase gamma chain (291 aa).

It belongs to the ATPase gamma chain family. F-type ATPases have 2 components, CF(1) - the catalytic core - and CF(0) - the membrane proton channel. CF(1) has five subunits: alpha(3), beta(3), gamma(1), delta(1), epsilon(1). CF(0) has three main subunits: a, b and c.

It localises to the cell inner membrane. In terms of biological role, produces ATP from ADP in the presence of a proton gradient across the membrane. The gamma chain is believed to be important in regulating ATPase activity and the flow of protons through the CF(0) complex. This chain is ATP synthase gamma chain, found in Roseobacter denitrificans (strain ATCC 33942 / OCh 114) (Erythrobacter sp. (strain OCh 114)).